The following is a 238-amino-acid chain: Probable transcriptional regulatory protein YeeN (238 aa).

The protein belongs to the TACO1 family. YeeN subfamily.

The protein localises to the cytoplasm. This chain is Probable transcriptional regulatory protein YeeN, found in Escherichia coli (strain UTI89 / UPEC).